Here is a 292-residue protein sequence, read N- to C-terminus: MKQHFTCIGIVGRPRHDSALITHKTLYEWLIKNGYKVFIEHTVARELKLNNPNTATLIEIGEFCDLAVVIGGDGNLLCAARVLSFYNIKIIGINRGNLGFLADLNPDTGLKKLSEVLSGNYSLENRFLLDAQVCQKKIISRSSIAINEVVLHTKNLAHMIEFEVYIDNKFSFSQRADGLIVSTPTGSTGYSLSAGGPIIAASLDAIVLVPMFPHTLSARPLVIHSDSIICLKFSNIQTNLKISCDSQIILTIKKGECVFIRRSCYYLNLIHPKSYNYFKTLTSKLSWSKKFF.

The active-site Proton acceptor is the Asp-73. NAD(+) is bound by residues 73–74 (DG), 147–148 (NE), His-158, Arg-175, Asp-177, 188–193 (TGYSLS), and Gln-247.

It belongs to the NAD kinase family. It depends on a divalent metal cation as a cofactor.

Its subcellular location is the cytoplasm. The catalysed reaction is NAD(+) + ATP = ADP + NADP(+) + H(+). Its function is as follows. Involved in the regulation of the intracellular balance of NAD and NADP, and is a key enzyme in the biosynthesis of NADP. Catalyzes specifically the phosphorylation on 2'-hydroxyl of the adenosine moiety of NAD to yield NADP. In Buchnera aphidicola subsp. Acyrthosiphon pisum (strain 5A), this protein is NAD kinase.